The following is a 98-amino-acid chain: Co-chaperonin GroES (98 aa).

The protein belongs to the GroES chaperonin family. As to quaternary structure, heptamer of 7 subunits arranged in a ring. Interacts with the chaperonin GroEL.

The protein resides in the cytoplasm. Functionally, together with the chaperonin GroEL, plays an essential role in assisting protein folding. The GroEL-GroES system forms a nano-cage that allows encapsulation of the non-native substrate proteins and provides a physical environment optimized to promote and accelerate protein folding. GroES binds to the apical surface of the GroEL ring, thereby capping the opening of the GroEL channel. In Clavibacter michiganensis subsp. michiganensis (strain NCPPB 382), this protein is Co-chaperonin GroES.